The primary structure comprises 405 residues: Pentatricopeptide repeat-containing protein At3g14580, mitochondrial (405 aa).

A mitochondrion-targeting transit peptide spans 1-37 (MILRRLVLSATSNSNPRRSQSLSSSGVRILSSSSSDR). The segment at 13–44 (NSNPRRSQSLSSSGVRILSSSSSDRYTSSSQR) is disordered. PPR repeat units lie at residues 94 to 124 (TESLYALMINKFGQAKMYDEIEEVMRTIKLE), 130 to 165 (SEEFFYNLMRIYGNLAGRINRAIEILFGMPDFGCWP), 166 to 200 (SSKSFNFILNLLVSAKLFDEIHKIFVSAPKLGVEI), 201 to 235 (DACCLNILIKGLCESGNLEAALQLLDEFPQQKSRP), 236 to 270 (NVMTFSPLIRGFCNKGKFEEAFKLLERMEKERIEP), 271 to 305 (DTITFNILISGLRKKGRVEEGIDLLERMKVKGCEP), 306 to 340 (NPGTYQEVLYGLLDKKRNLEAKEMMSQMISWGMRP), and 341 to 375 (SFLSYKKMVLGLCETKSVVEMDWVLRQMVNHGFVP).

The protein belongs to the PPR family. P subfamily.

The protein resides in the mitochondrion. This is Pentatricopeptide repeat-containing protein At3g14580, mitochondrial from Arabidopsis thaliana (Mouse-ear cress).